The following is a 178-amino-acid chain: MTTLRAFTCDDLFRFNNINLDPLTETYGIPFYLQYLAHWPEYFIVAEAPGGELMGYIMGKAEGSVAREEWHGHVTALSVAPEFRRLGLAAKLMELLEEISERKGGFFVDLFVRVSNQVAVNMYKQLGYSVYRTVIEYYSASNGEPDEDAYDMRKALSRDTEKKSIVPLPHPVRPEDIE.

The 156-residue stretch at 2-157 (TTLRAFTCDD…DAYDMRKALS (156 aa)) folds into the N-acetyltransferase domain. Positions 159–178 (DTEKKSIVPLPHPVRPEDIE) are disordered.

Belongs to the acetyltransferase family. ARD1 subfamily. Component of the N-terminal acetyltransferase B (NatB) complex which is composed of naa20 and naa25.

It localises to the cytoplasm. It is found in the nucleus. The enzyme catalyses N-terminal L-methionyl-L-asparaginyl-[protein] + acetyl-CoA = N-terminal N(alpha)-acetyl-L-methionyl-L-asparaginyl-[protein] + CoA + H(+). The catalysed reaction is N-terminal L-methionyl-L-glutaminyl-[protein] + acetyl-CoA = N-terminal N(alpha)-acetyl-L-methionyl-L-glutaminyl-[protein] + CoA + H(+). It catalyses the reaction N-terminal L-methionyl-L-aspartyl-[protein] + acetyl-CoA = N-terminal N(alpha)-acetyl-L-methionyl-L-aspartyl-[protein] + CoA + H(+). It carries out the reaction N-terminal L-methionyl-L-glutamyl-[protein] + acetyl-CoA = N-terminal N(alpha)-acetyl-L-methionyl-L-glutamyl-[protein] + CoA + H(+). In terms of biological role, catalytic subunit of the NatB complex which catalyzes acetylation of the N-terminal methionine residues of peptides beginning with Met-Asp, Met-Glu, Met-Asn and Met-Gln. Proteins with cell cycle functions are overrepresented in the pool of NatB substrates. Required for maintaining the structure and function of actomyosin fibers and for proper cellular migration. In Xenopus laevis (African clawed frog), this protein is N-alpha-acetyltransferase 20 (naa20).